A 512-amino-acid chain; its full sequence is Putative ankyrin repeat protein FPV233 (512 aa).

8 ANK repeats span residues 45–73 (IPFI…NVNQ), 77–106 (DDTY…QCSV), 136–168 (IQDI…DINM), 172–201 (HGNS…NPNI), 205–236 (TNKS…NTDP), 238–262 (LSHA…SINA), 266–296 (YGNT…DVNA), and 301–329 (RNLT…DINS).

This chain is Putative ankyrin repeat protein FPV233, found in Vertebrata (FPV).